The sequence spans 339 residues: Ketol-acid reductoisomerase (NADP(+)) (339 aa).

The region spanning 1–182 (MPNRYYEKDG…GCLKAGVIDT (182 aa)) is the KARI N-terminal Rossmann domain. Residues 25 to 28 (YGSQ), Ser51, Ser53, and 83 to 86 (DHIQ) each bind NADP(+). His108 is an active-site residue. Gly134 contributes to the NADP(+) binding site. In terms of domain architecture, KARI C-terminal knotted spans 183-328 (NFREETESDL…RELREMMTFL (146 aa)). Residues Asp191, Glu195, Glu227, and Glu231 each coordinate Mg(2+). Ser252 provides a ligand contact to substrate.

It belongs to the ketol-acid reductoisomerase family. It depends on Mg(2+) as a cofactor.

The catalysed reaction is (2R)-2,3-dihydroxy-3-methylbutanoate + NADP(+) = (2S)-2-acetolactate + NADPH + H(+). The enzyme catalyses (2R,3R)-2,3-dihydroxy-3-methylpentanoate + NADP(+) = (S)-2-ethyl-2-hydroxy-3-oxobutanoate + NADPH + H(+). It functions in the pathway amino-acid biosynthesis; L-isoleucine biosynthesis; L-isoleucine from 2-oxobutanoate: step 2/4. It participates in amino-acid biosynthesis; L-valine biosynthesis; L-valine from pyruvate: step 2/4. Its function is as follows. Involved in the biosynthesis of branched-chain amino acids (BCAA). Catalyzes an alkyl-migration followed by a ketol-acid reduction of (S)-2-acetolactate (S2AL) to yield (R)-2,3-dihydroxy-isovalerate. In the isomerase reaction, S2AL is rearranged via a Mg-dependent methyl migration to produce 3-hydroxy-3-methyl-2-ketobutyrate (HMKB). In the reductase reaction, this 2-ketoacid undergoes a metal-dependent reduction by NADPH to yield (R)-2,3-dihydroxy-isovalerate. This is Ketol-acid reductoisomerase (NADP(+)) from Solibacter usitatus (strain Ellin6076).